A 207-amino-acid polypeptide reads, in one-letter code: Dephospho-CoA kinase (207 aa).

One can recognise a DPCK domain in the interval 4–203 (VIGLTGGIAS…EEGYIEKPNY (200 aa)). ATP is bound at residue 12–17 (ASGKST).

It belongs to the CoaE family.

The protein localises to the cytoplasm. It carries out the reaction 3'-dephospho-CoA + ATP = ADP + CoA + H(+). It functions in the pathway cofactor biosynthesis; coenzyme A biosynthesis; CoA from (R)-pantothenate: step 5/5. Its function is as follows. Catalyzes the phosphorylation of the 3'-hydroxyl group of dephosphocoenzyme A to form coenzyme A. This chain is Dephospho-CoA kinase, found in Staphylococcus aureus (strain USA300).